The sequence spans 428 residues: GTPase Obg (428 aa).

In terms of domain architecture, Obg spans 1–158 (MFVDQVKIYV…RDVILELKVL (158 aa)). The region spanning 159–329 (ADVGLVGFPS…LLFEVANLLE (171 aa)) is the OBG-type G domain. GTP is bound by residues 165-172 (GFPSVGKS), 190-194 (FTTIV), 212-215 (DLPG), 282-285 (NKMD), and 310-312 (SAV). Residues Ser172 and Thr192 each coordinate Mg(2+). An OCT domain is found at 350–428 (KLETEGVKFD…ILEYEFEFID (79 aa)).

The protein belongs to the TRAFAC class OBG-HflX-like GTPase superfamily. OBG GTPase family. Monomer. The cofactor is Mg(2+).

It localises to the cytoplasm. An essential GTPase which binds GTP, GDP and possibly (p)ppGpp with moderate affinity, with high nucleotide exchange rates and a fairly low GTP hydrolysis rate. Plays a role in control of the cell cycle, stress response, ribosome biogenesis and in those bacteria that undergo differentiation, in morphogenesis control. The sequence is that of GTPase Obg from Bacillus cereus (strain Q1).